The following is a 501-amino-acid chain: Membrane-bound lytic murein transglycosylase F (501 aa).

An N-terminal signal peptide occupies residues 1–29 (MTKILLNTASTVLTRLWKLSLLGLVFAVA). The tract at residues 30-274 (AATLVSSRIP…DAMETFYGHL (245 aa)) is non-LT domain. Residues 275-501 (GEIDYSGAIL…VKSISGTSSL (227 aa)) form an LT domain region. Glutamate 321 is a catalytic residue.

It in the N-terminal section; belongs to the bacterial solute-binding protein 3 family. The protein in the C-terminal section; belongs to the transglycosylase Slt family.

It is found in the cell outer membrane. It catalyses the reaction Exolytic cleavage of the (1-&gt;4)-beta-glycosidic linkage between N-acetylmuramic acid (MurNAc) and N-acetylglucosamine (GlcNAc) residues in peptidoglycan, from either the reducing or the non-reducing ends of the peptidoglycan chains, with concomitant formation of a 1,6-anhydrobond in the MurNAc residue.. In terms of biological role, murein-degrading enzyme that degrades murein glycan strands and insoluble, high-molecular weight murein sacculi, with the concomitant formation of a 1,6-anhydromuramoyl product. Lytic transglycosylases (LTs) play an integral role in the metabolism of the peptidoglycan (PG) sacculus. Their lytic action creates space within the PG sacculus to allow for its expansion as well as for the insertion of various structures such as secretion systems and flagella. The protein is Membrane-bound lytic murein transglycosylase F of Saccharophagus degradans (strain 2-40 / ATCC 43961 / DSM 17024).